The primary structure comprises 654 residues: Pyoverdine export ATP-binding/permease protein PvdT (654 aa).

One can recognise an ABC transporter domain in the interval 6–245 (IELCDIRKAY…AHKGIQAEEL (240 aa)). An ATP-binding site is contributed by 43-50 (GASGSGKS). 4 consecutive transmembrane segments (helical) span residues 282–302 (ALTLLGIIIGVASVVVMLAVG), 529–549 (LSLMLGAIAAISLLVGGIGVM), 584–604 (AIMLSMVGGLTGIALALVVGA), and 614–634 (AFALPAIVGAFACAVITGVVF).

The protein belongs to the ABC transporter superfamily. Macrolide exporter (TC 3.A.1.122) family. Part of the tripartite efflux system PvdRT-OpmQ, which is composed of an inner membrane component with both ATPase and permease domains, PvdT, a periplasmic membrane fusion protein, PvdR, and an outer membrane component, OpmQ.

Its subcellular location is the cell inner membrane. With respect to regulation, has a basal ATPase activity that is stimulated by PvdR. In vitro, interaction with PVD influences the affinity of PvdT to PvdR. Functionally, part of the tripartite efflux system PvdRT-OpmQ required for the secretion into the extracellular milieu of the siderophore pyoverdine (PVD), which is involved in iron acquisition. This subunit binds PVD and drives its secretion by hydrolyzing ATP. The system is responsible for export of newly synthesized PVD after the final steps of biosynthesis have taken place in the periplasm. It is also responsible for recycling of PVD after internalization of ferri-PVD into the periplasm by the outer-membrane receptor FpvA and release of iron from PVD, thus making PVD available for new cycles of iron uptake. Contributes to resistance against ampicillin. This chain is Pyoverdine export ATP-binding/permease protein PvdT, found in Pseudomonas putida (strain ATCC 47054 / DSM 6125 / CFBP 8728 / NCIMB 11950 / KT2440).